The following is a 428-amino-acid chain: Serine--tRNA ligase (428 aa).

Residue 237-239 (TAE) coordinates L-serine. ATP is bound at residue 268 to 270 (RSE). Position 291 (Glu-291) interacts with L-serine. ATP is bound at residue 355-358 (EISS). Ser-390 contacts L-serine.

It belongs to the class-II aminoacyl-tRNA synthetase family. Type-1 seryl-tRNA synthetase subfamily. In terms of assembly, homodimer. The tRNA molecule binds across the dimer.

The protein localises to the cytoplasm. The catalysed reaction is tRNA(Ser) + L-serine + ATP = L-seryl-tRNA(Ser) + AMP + diphosphate + H(+). It catalyses the reaction tRNA(Sec) + L-serine + ATP = L-seryl-tRNA(Sec) + AMP + diphosphate + H(+). Its pathway is aminoacyl-tRNA biosynthesis; selenocysteinyl-tRNA(Sec) biosynthesis; L-seryl-tRNA(Sec) from L-serine and tRNA(Sec): step 1/1. In terms of biological role, catalyzes the attachment of serine to tRNA(Ser). Is also able to aminoacylate tRNA(Sec) with serine, to form the misacylated tRNA L-seryl-tRNA(Sec), which will be further converted into selenocysteinyl-tRNA(Sec). The sequence is that of Serine--tRNA ligase from Hydrogenovibrio crunogenus (strain DSM 25203 / XCL-2) (Thiomicrospira crunogena).